Consider the following 409-residue polypeptide: Tryptophan synthase beta chain (409 aa).

N6-(pyridoxal phosphate)lysine is present on lysine 104.

Belongs to the TrpB family. As to quaternary structure, tetramer of two alpha and two beta chains. The cofactor is pyridoxal 5'-phosphate.

The enzyme catalyses (1S,2R)-1-C-(indol-3-yl)glycerol 3-phosphate + L-serine = D-glyceraldehyde 3-phosphate + L-tryptophan + H2O. Its pathway is amino-acid biosynthesis; L-tryptophan biosynthesis; L-tryptophan from chorismate: step 5/5. The beta subunit is responsible for the synthesis of L-tryptophan from indole and L-serine. This chain is Tryptophan synthase beta chain, found in Trichodesmium erythraeum (strain IMS101).